The chain runs to 138 residues: Cellular retinoic acid-binding protein 2 (138 aa).

Positions 21–31 (KVLGVNVMLRK) match the Nuclear localization signal motif. Lysine 102 participates in a covalent cross-link: Glycyl lysine isopeptide (Lys-Gly) (interchain with G-Cter in SUMO). Residue 133-135 (RVY) participates in all-trans-retinoate binding.

It belongs to the calycin superfamily. Fatty-acid binding protein (FABP) family. In terms of assembly, interacts with RXR and RARA. Interacts with importin alpha. Post-translationally, sumoylated in response to retinoic acid binding, sumoylation is critical for dissociation from ER and subsequent nuclear translocation.

It is found in the cytoplasm. The protein resides in the endoplasmic reticulum. The protein localises to the nucleus. Its function is as follows. Transports retinoic acid to the nucleus. Regulates the access of retinoic acid to the nuclear retinoic acid receptors. This chain is Cellular retinoic acid-binding protein 2 (CRABP2), found in Homo sapiens (Human).